Reading from the N-terminus, the 62-residue chain is Photosystem II reaction center protein Z (62 aa).

2 helical membrane passes run 8–28 (AVFA…LVFA) and 41–61 (FSGT…NSLI).

Belongs to the PsbZ family. As to quaternary structure, PSII is composed of 1 copy each of membrane proteins PsbA, PsbB, PsbC, PsbD, PsbE, PsbF, PsbH, PsbI, PsbJ, PsbK, PsbL, PsbM, PsbT, PsbY, PsbZ, Psb30/Ycf12, at least 3 peripheral proteins of the oxygen-evolving complex and a large number of cofactors. It forms dimeric complexes.

The protein resides in the plastid. Its subcellular location is the chloroplast thylakoid membrane. Its function is as follows. May control the interaction of photosystem II (PSII) cores with the light-harvesting antenna, regulates electron flow through the 2 photosystem reaction centers. PSII is a light-driven water plastoquinone oxidoreductase, using light energy to abstract electrons from H(2)O, generating a proton gradient subsequently used for ATP formation. The chain is Photosystem II reaction center protein Z from Oryza nivara (Indian wild rice).